The chain runs to 175 residues: Alpha-crystallin B chain (175 aa).

Position 1 is an N-acetylmethionine (M1). S19 bears the Phosphoserine mark. S41 carries O-linked (GlcNAc) serine glycosylation. Residues S45 and S59 each carry the phosphoserine modification. Positions 56–164 constitute a sHSP domain; sequence RAPSWFDTGL…PERTIPITRE (109 aa). H83 serves as a coordination point for Zn(2+). An N6-acetyllysine modification is found at K92. Zn(2+) contacts are provided by H104, E106, H111, and H119. Residues 142–175 form a disordered region; the sequence is VLTVNGPRKQVSGPERTIPITREEKPAVTAAPKK. Position 166 is an N6-acetyllysine (K166). T170 carries O-linked (GlcNAc) threonine glycosylation.

The protein belongs to the small heat shock protein (HSP20) family. As to quaternary structure, heteromer composed of three CRYAA and one CRYAB subunits. Aggregates with homologous proteins, including the small heat shock protein HSPB1, to form large heteromeric complexes. Inter-subunit bridging via zinc ions enhances stability, which is crucial as there is no protein turn over in the lens. Interacts with HSPBAP1 and TTN/titin. Interacts with TMEM109; in the cellular response to DNA damage. Interacts with DES; binds rapidly during early stages of DES filament assembly and a reduced binding seen in the later stages. Interacts with TMED10; the interaction mediates the translocation from the cytoplasm into the ERGIC (endoplasmic reticulum-Golgi intermediate compartment) and thereby secretion. Interacts with ATP6V1A and with MTOR, forming a ternary complex.

It is found in the cytoplasm. Its subcellular location is the nucleus. The protein localises to the secreted. It localises to the lysosome. Functionally, may contribute to the transparency and refractive index of the lens. Has chaperone-like activity, preventing aggregation of various proteins under a wide range of stress conditions. In lens epithelial cells, stabilizes the ATP6V1A protein, preventing its degradation by the proteasome. The chain is Alpha-crystallin B chain (CRYAB) from Macaca fascicularis (Crab-eating macaque).